A 58-amino-acid chain; its full sequence is ATP synthase F(0) complex subunit k, mitochondrial (58 aa).

Lys-16 and Lys-17 each carry N6-acetyllysine; partial. Residues 23–45 (TLTGRMNCVLATYGSIALIVLYF) traverse the membrane as a helical segment.

As to quaternary structure, component of the ATP synthase complex composed at least of ATP5F1A/subunit alpha, ATP5F1B/subunit beta, ATP5MC1/subunit c (homooctomer), MT-ATP6/subunit a, MT-ATP8/subunit 8, ATP5ME/subunit e, ATP5MF/subunit f, ATP5MG/subunit g, ATP5MK/subunit k, ATP5MJ/subunit j, ATP5F1C/subunit gamma, ATP5F1D/subunit delta, ATP5F1E/subunit epsilon, ATP5PF/subunit F6, ATP5PB/subunit b, ATP5PD/subunit d, ATP5PO/subunit OSCP. ATP synthase complex consists of a soluble F(1) head domain (subunits alpha(3) and beta(3)) - the catalytic core - and a membrane F(0) domain - the membrane proton channel (subunits c, a, 8, e, f, g, k and j). These two domains are linked by a central stalk (subunits gamma, delta, and epsilon) rotating inside the F1 region and a stationary peripheral stalk (subunits F6, b, d, and OSCP). The ATP synthase complex/complex V exists as a monomeric and a dimeric supercomplex that helps shape mitochondrial cristae to optimize proton flow.

It localises to the mitochondrion membrane. Subunit k, of the mitochondrial membrane ATP synthase complex (F(1)F(0) ATP synthase or Complex V) that produces ATP from ADP in the presence of a proton gradient across the membrane which is generated by electron transport complexes of the respiratory chain. ATP synthase complex consist of a soluble F(1) head domain - the catalytic core - and a membrane F(1) domain - the membrane proton channel. These two domains are linked by a central stalk rotating inside the F(1) region and a stationary peripheral stalk. During catalysis, ATP synthesis in the catalytic domain of F(1) is coupled via a rotary mechanism of the central stalk subunits to proton translocation. In vivo, can only synthesize ATP although its ATP hydrolase activity can be activated artificially in vitro. Part of the complex F(0) domain. Required for dimerization of the ATP synthase complex and as such regulates ATP synthesis in the mitochondria. This chain is ATP synthase F(0) complex subunit k, mitochondrial, found in Bos taurus (Bovine).